We begin with the raw amino-acid sequence, 554 residues long: Glucose-6-phosphate isomerase (554 aa).

Catalysis depends on Glu358, which acts as the Proton donor. Active-site residues include His389 and Lys515. Positions 527–540 are enriched in polar residues; it reads ADNSPAPQSDSSTD. The interval 527–554 is disordered; sequence ADNSPAPQSDSSTDALVRRYRSERGRTS. The span at 542–554 shows a compositional bias: basic and acidic residues; the sequence is LVRRYRSERGRTS.

The protein belongs to the GPI family.

Its subcellular location is the cytoplasm. The enzyme catalyses alpha-D-glucose 6-phosphate = beta-D-fructose 6-phosphate. Its pathway is carbohydrate biosynthesis; gluconeogenesis. The protein operates within carbohydrate degradation; glycolysis; D-glyceraldehyde 3-phosphate and glycerone phosphate from D-glucose: step 2/4. In terms of biological role, catalyzes the reversible isomerization of glucose-6-phosphate to fructose-6-phosphate. The sequence is that of Glucose-6-phosphate isomerase from Mycobacterium avium (strain 104).